A 189-amino-acid chain; its full sequence is Large ribosomal subunit protein bL17 (189 aa).

Residues 136–189 form a disordered region; that stretch reads KAAPAAEEEVVETEEAPAVEAEAAESEEAPAAEAEAAEAEAAETEEAPAAEDKK. Residues 141–189 are compositionally biased toward acidic residues; sequence AEEEVVETEEAPAVEAEAAESEEAPAAEAEAAEAEAAETEEAPAAEDKK.

The protein belongs to the bacterial ribosomal protein bL17 family. In terms of assembly, part of the 50S ribosomal subunit. Contacts protein L32.

The chain is Large ribosomal subunit protein bL17 from Paenarthrobacter aurescens (strain TC1).